Here is a 468-residue protein sequence, read N- to C-terminus: MPEGEGGDCGEVPALVPDGEPLREEQRPLKQSLGGSLCRESHWKCLLLTLLIHACGAVVAWCRLATVPRLVLGPEAALARGAGGPPPTYPASPCSDGYLYIPLAFVSLLYLLYLAECWHCHVRSCQAPRTDANTVLALIHRLQQAPPCVWWKATSYHYVRRTRQITRYRNGDAYTTTQVYHERADSRTARGEFDYSAHGVRDVSKELVGLADHAATRLRFTKCFSFGSAEAEASYLTQRARFFSANEGLDDYLEAREGMHLKDVDFRESLMVFADPRSPPWYARAWVFWLVSAATLSWPLRVVAAYGTAHVHYQVEKLFGASSPPPGAVPSGPPLSRVATVDFTELEWHICSNRQLVPSYSEAVVMGASSGAYLRGCQRCRRSVSSNSLPPARPSGPRLPFSRSRLSLGAGGRTTPGVFRSLSGGPLGRRGEDTEPLESPPCYEDALYFPVLIVHGDSGCRGDGQGAL.

A disordered region spans residues 1–20 (MPEGEGGDCGEVPALVPDGE). Helical transmembrane passes span 45-65 (CLLLTLLIHACGAVVAWCRLA) and 98-118 (YLYIPLAFVSLLYLLYLAECW). The tract at residues 384–438 (VSSNSLPPARPSGPRLPFSRSRLSLGAGGRTTPGVFRSLSGGPLGRRGEDTEPLE) is disordered.

This sequence belongs to the TMEM151 family. As to expression, highly expressed in the central nervous system (CNS) including the cerebral cortex, hippocampus, spinal cord, brainstem, and thalamus. Expression is relatively low during postnatal stages but highly expressed at postnatal day 14 (P14), and declined in adulthood. Also expressed in the stomach, heart, liver, spleen, lung, kidney, and muscle.

The protein resides in the endoplasmic reticulum membrane. Its subcellular location is the cell projection. It localises to the axon. The protein localises to the dendrite. This chain is Transmembrane protein 151A (Tmem151a), found in Mus musculus (Mouse).